The primary structure comprises 262 residues: MNRIDRRFDDLKKEGKKALITFITAGDPDIDTTYDIVLALEEAGADIIELGIPYSDPLADGPTIQASSQRALAKGIKIKDIMDLVMRIREKSDIPIVYLVYYNSVFKYGIEKFLEDSKNAGVDGLIIPDLPLEERKEVLDVADKYEIYLIPLVAPTSKERIKGITENGKGFVYCVTLTGVTGAREEITTDLEEYMRLVSSYTSMPKALGFGISGPEMARKLKSLSDGIVVGSAIVERIAKGYNRCEMLKEVKEFVLSLREVL.

Catalysis depends on proton acceptor residues Glu49 and Asp60.

The protein belongs to the TrpA family. Tetramer of two alpha and two beta chains.

The enzyme catalyses (1S,2R)-1-C-(indol-3-yl)glycerol 3-phosphate + L-serine = D-glyceraldehyde 3-phosphate + L-tryptophan + H2O. The protein operates within amino-acid biosynthesis; L-tryptophan biosynthesis; L-tryptophan from chorismate: step 5/5. Its function is as follows. The alpha subunit is responsible for the aldol cleavage of indoleglycerol phosphate to indole and glyceraldehyde 3-phosphate. This is Tryptophan synthase alpha chain from Caldanaerobacter subterraneus subsp. tengcongensis (strain DSM 15242 / JCM 11007 / NBRC 100824 / MB4) (Thermoanaerobacter tengcongensis).